Here is a 446-residue protein sequence, read N- to C-terminus: Phosphoglucosamine mutase (446 aa).

The active-site Phosphoserine intermediate is the Ser100. Residues Ser100, Asp241, Asp243, and Asp245 each coordinate Mg(2+). Ser100 carries the phosphoserine modification.

Belongs to the phosphohexose mutase family. The cofactor is Mg(2+). Post-translationally, activated by phosphorylation.

It carries out the reaction alpha-D-glucosamine 1-phosphate = D-glucosamine 6-phosphate. Its function is as follows. Catalyzes the conversion of glucosamine-6-phosphate to glucosamine-1-phosphate. This is Phosphoglucosamine mutase from Methylobacterium sp. (strain 4-46).